Consider the following 158-residue polypeptide: Small ribosomal subunit protein uS7 (158 aa).

Belongs to the universal ribosomal protein uS7 family. In terms of assembly, part of the 30S ribosomal subunit. Contacts proteins S9 and S11.

One of the primary rRNA binding proteins, it binds directly to 16S rRNA where it nucleates assembly of the head domain of the 30S subunit. Is located at the subunit interface close to the decoding center, probably blocks exit of the E-site tRNA. The sequence is that of Small ribosomal subunit protein uS7 from Christiangramia forsetii (strain DSM 17595 / CGMCC 1.15422 / KT0803) (Gramella forsetii).